The following is a 354-amino-acid chain: Guanine nucleotide-binding protein G(i) subunit alpha-3 (354 aa).

A lipid anchor (N-myristoyl glycine) is attached at Gly2. Cys3 carries the S-palmitoyl cysteine lipid modification. The 323-residue stretch at 32 to 354 folds into the G-alpha domain; it reads KEVKLLLLGA…KNNLKECGLY (323 aa). Positions 35–48 are G1 motif; it reads KLLLLGAGESGKST. Residues Gly42, Glu43, Ser44, Gly45, Lys46, Ser47, Thr48, Asp150, Ser151, Leu175, Arg176, Thr177, Arg178, Val179, Lys180, Thr181, Val201, Gly203, Asn269, Lys270, Asp272, Leu273, Cys325, Ala326, and Thr327 each coordinate GTP. Ser47 is a binding site for Mg(2+). The segment at 173–181 is G2 motif; that stretch reads DVLRTRVKT. Thr181 contacts Mg(2+). A G3 motif region spans residues 196–205; the sequence is FKMFDVGGQR. Residues 265–272 form a G4 motif region; the sequence is ILFLNKKD. The interval 324-329 is G5 motif; it reads TCATDT.

It belongs to the G-alpha family. G(i/o/t/z) subfamily. As to quaternary structure, heterotrimeric G proteins are composed of 3 units; alpha, beta and gamma. The alpha subunit contains the guanine nucleotide binding site. GTP binding causes dissociation of the heterotrimer, liberating the individual subunits so that they can interact with downstream effector proteins. Forms a complex with CCDC88A/GIV and EGFR which leads to enhanced EGFR signaling and triggering of cell migration; ligand stimulation is required for recruitment of GNAI3 to the complex. Interacts (inactive GDP-bound form) with CCDC88A/GIV (via GBA motif); the interaction leads to activation of GNAI3. Interacts (inactive GDP-bound form) with CCDC88C/DAPLE (via GBA motif); the interaction leads to activation of GNAI3. Interacts (inactive GDP-bound form) with NUCB1 (via GBA motif) and NUCB2 (via GBA motif); the interaction leads to activation of GNAI3. Interacts (inactive GDP-bound form) with PLCD4 (via GBA motif); the interaction leads to activation of GNAI3. Interacts with INSR; the interaction is probably mediated by CCDC88A/GIV. Interacts with GPSM1. Interacts (GDP-bound form) with GPSM2 (via GoLoco domains). Does not interact with RGS2. Interacts with RGS8 and RGS10; this strongly enhances the intrinsic GTPase activity. Interacts with RGS12. Interacts with RGS16; this strongly enhances the intrinsic GTPase activity. Interacts (via active GTP- or inactive GDP-bound form) with RGS14. Interacts (via active GTP-bound form) with TRPC5 (via ANK repeats) in a homotetrameric ion channel; the interaction is direct and activates the channel activity. Ubiquitous.

It is found in the cytoplasm. The protein resides in the cell membrane. Its subcellular location is the cytoskeleton. The protein localises to the microtubule organizing center. It localises to the centrosome. Functionally, heterotrimeric guanine nucleotide-binding proteins (G proteins) function as transducers downstream of G protein-coupled receptors (GPCRs) in numerous signaling cascades. The alpha chain contains the guanine nucleotide binding site and alternates between an active, GTP-bound state and an inactive, GDP-bound state. Signaling by an activated GPCR promotes GDP release and GTP binding. The alpha subunit has a low GTPase activity that converts bound GTP to GDP, thereby terminating the signal. Both GDP release and GTP hydrolysis are modulated by numerous regulatory proteins. Signaling is mediated via effector proteins, such as adenylate cyclase. Inhibits adenylate cyclase activity, leading to decreased intracellular cAMP levels. Stimulates the activity of receptor-regulated K(+) channels. The active GTP-bound form prevents the association of RGS14 with centrosomes and is required for the translocation of RGS14 from the cytoplasm to the plasma membrane. May play a role in cell division. The active GTP-bound form activates the calcium permeant TRPC5 ion channels. The polypeptide is Guanine nucleotide-binding protein G(i) subunit alpha-3 (Gnai3) (Rattus norvegicus (Rat)).